Consider the following 375-residue polypeptide: Fluoride export protein 2 (375 aa).

Over methionine 1–lysine 11 the chain is Cytoplasmic. A helical transmembrane segment spans residues leucine 12–threonine 32. Over arginine 33–glutamine 34 the chain is Extracellular. Residues alanine 35–serine 55 form a helical membrane-spanning segment. Topologically, residues asparagine 56–glutamine 79 are cytoplasmic. A helical transmembrane segment spans residues valine 80–leucine 100. Residues leucine 101–glycine 127 are Extracellular-facing. Residues asparagine 109 and asparagine 117 are each glycosylated (N-linked (GlcNAc...) asparagine). Residues isoleucine 128 to phenylalanine 148 form a helical membrane-spanning segment. Residues glycine 149–lysine 213 lie on the Cytoplasmic side of the membrane. Residues leucine 214–glutamate 234 form a helical membrane-spanning segment. N-linked (GlcNAc...) asparagine glycosylation is present at asparagine 235. Residues asparagine 235–tryptophan 241 are Extracellular-facing. The chain crosses the membrane as a helical span at residues threonine 242–phenylalanine 262. Residues asparagine 263 to lysine 268 are Cytoplasmic-facing. The chain crosses the membrane as a helical span at residues phenylalanine 269 to methionine 289. At valine 290 to cysteine 310 the chain is on the extracellular side. The helical transmembrane segment at histidine 311 to isoleucine 331 threads the bilayer. Over asparagine 332–serine 338 the chain is Cytoplasmic. Residues phenylalanine 339–isoleucine 359 traverse the membrane as a helical segment. Residues threonine 360 to cysteine 375 lie on the Extracellular side of the membrane.

The protein belongs to the fluoride channel Fluc/FEX (TC 1.A.43) family.

It localises to the cell membrane. The catalysed reaction is fluoride(in) = fluoride(out). In terms of biological role, fluoride channel required for the rapid expulsion of cytoplasmic fluoride. This Saccharomyces cerevisiae (strain ATCC 204508 / S288c) (Baker's yeast) protein is Fluoride export protein 2.